A 744-amino-acid polypeptide reads, in one-letter code: Prestin (744 aa).

Residues 1 to 75 are Cytoplasmic-facing; sequence MDHAEENEIL…PITKWLPAYK (75 aa). Residues 76 to 105 traverse the membrane as a helical segment; sequence FKEYVLGDLVSGISTGVLQLPQGLAFAMLA. Over 106–108 the chain is Extracellular; the sequence is AVP. A helical transmembrane segment spans residues 109-126; the sequence is PIFGLYSSFYPVIMYCFL. At 127–137 the chain is on the cytoplasmic side; that stretch reads GTSRHISIGPF. The helical transmembrane segment at 138 to 151 threads the bilayer; it reads AVISLMIGGVAVRL. Residues 152 to 168 are Extracellular-facing; the sequence is VPDDIVIPGGVNATNGT. The Involved in motor function signature appears at 158-168; sequence IPGGVNATNGT. N-linked (GlcNAc...) asparagine glycosylation is found at asparagine 163 and asparagine 166. The helical transmembrane segment at 169–196 threads the bilayer; the sequence is EARDALRVKVAMSVTLLSGIIQFCLGVC. Topologically, residues 197 to 206 are cytoplasmic; sequence RFGFVAIYLT. Residues 207–230 traverse the membrane as a helical segment; that stretch reads EPLVRGFTTAAAVHVFTSMLKYLF. At 231-241 the chain is on the extracellular side; it reads GVKTKRYSGIF. Positions 242 to 253 form an intramembrane region, helical; that stretch reads SVVYSTVAVLQN. Over 254-258 the chain is Extracellular; that stretch reads VKNLN. The chain crosses the membrane as a helical span at residues 259 to 282; the sequence is VCSLGVGLMVFGLLLGGKEFNERF. The Cytoplasmic segment spans residues 283 to 291; sequence KEKLPAPIP. Residues 292-307 traverse the membrane as a helical segment; that stretch reads LEFFAVVMGTGISAGF. The Extracellular portion of the chain corresponds to 308–332; that stretch reads NLKESYNVDVVGTLPLGLLPPANPD. Residues 333 to 367 traverse the membrane as a helical segment; it reads TSLFHLVYVDAIAIAIVGFSVTISMAKTLANKHGY. Residues 368-370 are Cytoplasmic-facing; that stretch reads QVD. The chain crosses the membrane as a helical span at residues 371–388; that stretch reads GNQELIALGLCNSIGSLF. Residues 389–396 are Extracellular-facing; that stretch reads QTFSISCS. The helical transmembrane segment at 397-406 threads the bilayer; it reads LSRSLVQEGT. Serine 398 serves as a coordination point for salicylate. The Cytoplasmic segment spans residues 407–410; the sequence is GGKT. A helical membrane pass occupies residues 411-432; it reads QLAGCLASLMILLVILATGFLF. Topologically, residues 433–436 are extracellular; that stretch reads ESLP. A helical transmembrane segment spans residues 437–464; sequence QAVLSAIVIVNLKGMFMQFSDLPFFWRT. Serine 465 is a topological domain (cytoplasmic). The chain crosses the membrane as a helical span at residues 466-481; that stretch reads KIELTIWLTTFVSSLF. Topologically, residues 482–483 are extracellular; the sequence is LG. A helical membrane pass occupies residues 484-504; the sequence is LDYGLITAVIIALLTVIYRTQ. The tract at residues 505-718 is extended region for STAS domain; sequence SPSYKVLGKL…AVLGSQLREA (214 aa). Residues 505–744 are Cytoplasmic-facing; sequence SPSYKVLGKL…PNATPATPEA (240 aa). Residues 525 to 713 enclose the STAS domain; that stretch reads AYEEVKEIPG…HSIHDAVLGS (189 aa). A disordered region spans residues 718-744; the sequence is ALAEQEASAPPSQEDLEPNATPATPEA.

The protein belongs to the SLC26A/SulP transporter (TC 2.A.53) family. Homodimer. Interacts (via STAS domain) with CALM; this interaction is calcium-dependent and the STAS domain interacts with only one lobe of CALM which is an elongated conformation. Interacts with MYH1.

The protein resides in the lateral cell membrane. The enzyme catalyses 2 hydrogencarbonate(in) + chloride(out) = 2 hydrogencarbonate(out) + chloride(in). Voltage-sensitive motor protein that drives outer hair cell (OHC) electromotility (eM) and participates in sound amplification in the hearing organ. Converts changes in the transmembrane electric potential into mechanical displacements resulting in the coupling of its expansion to movement of a charged voltage sensor across the lipid membrane. The nature of the voltage sensor is not completely clear, and two models compete. In the first model, acts as an incomplete transporter where intracellular chloride anion acts as extrinsic voltage sensor that drives conformational change in the protein which is sufficient to produce a length change in the plane of the membrane and hence in the length of the OHC. The second model in which multiple charged amino acid residues are distributed at the intracellular and extracellular membrane interfaces that form an intrinsic voltage sensor, whose movement produces the non-linear capacitance (NLC). However, the effective voltage sensor may be the result of a hybrid voltage sensor, assembled from intrinsic charge (charged residues) and extrinsic charge (bound anion). Notably, binding of anions to the anion-binding pocket partially neutralizes the intrinsic positive charge rather than to form an electrically negative sensor, therefore remaining charge may serve as voltage sensor that, after depolarization, moves from down (expanded state) to up (contracted) conformation, which is accompanied by an eccentric contraction of the intermembrane cross-sectional area of the protein as well as a major increase in the hydrophobic thickness of the protein having as consequences the plasma membrane thickening and the cell contraction after membrane depolarization. The anion-binding pocket transits from the inward-open (Down) state, where it is exposed toward the intracellular solvent in the absence of anion, to the occluded (Up) state upon anion binding. Salicylate competes for the anion-binding site and inhibits the voltage-sensor movement, and therefore inhibits the charge transfer and electromotility by displacing Cl(-) from the anion-binding site and by preventing the structural transitions to the contracted state. In addition, can act as a weak Cl(-)/HCO3(-) antiporter across the cell membrane and so regulate the intracellular pH of the outer hair cells (OHCs), while firstly found as being unable to mediate electrogenic anion transport. Moreover, supports a role in cardiac mechanical amplification serving as an elastic element to enhance the actomyosin- based sarcomere contraction system. The sequence is that of Prestin from Homo sapiens (Human).